The following is a 563-amino-acid chain: Type 2 DNA topoisomerase 6 subunit B (563 aa).

ATP-binding positions include N46, D78, 99–100 (TK), 109–116 (GQQGIGIS), and K471.

Belongs to the TOP6B family. In terms of assembly, homodimer. Heterotetramer of two Top6A and two Top6B chains.

The enzyme catalyses ATP-dependent breakage, passage and rejoining of double-stranded DNA.. Its function is as follows. Relaxes both positive and negative superturns and exhibits a strong decatenase activity. The protein is Type 2 DNA topoisomerase 6 subunit B of Thermococcus onnurineus (strain NA1).